An 854-amino-acid polypeptide reads, in one-letter code: DNA mismatch repair protein MutS (854 aa).

615-622 (GPNMGGKS) serves as a coordination point for ATP.

The protein belongs to the DNA mismatch repair MutS family.

Its function is as follows. This protein is involved in the repair of mismatches in DNA. It is possible that it carries out the mismatch recognition step. This protein has a weak ATPase activity. This chain is DNA mismatch repair protein MutS, found in Proteus mirabilis (strain HI4320).